Consider the following 341-residue polypeptide: MLKKVYYFLIFLFIVACSSSDDGKSEAKTVSLIVDGAFDDKGFNESSSKAIRKLKADLNINIIEKASTGNSYLGDIANLEDGNSNLIWGIGFRLSDILFQRASENVSVNYAIIEGVYDEIQIPKNLLNISFRSEEVAFLAGYFASKASKTGKIGFVGGVRGKVLESFMYGYEAGAKYANSNIKVVSQYVGTFGDFGLGRSTASNMYRDGVDIIFAAAGLSGIGVIEAAKELGPDHYIIGVDQDQSYLAPNNVIVSAVKKVDSLMYSLTKKYLETGVLDGGKTMFLGLKEDGLGLVLNENLKSNYSEIYNKSLKIGQSIMNGIIKVPYDKVSYDNFVLQMEN.

A signal peptide spans 1-16 (MLKKVYYFLIFLFIVA). Cysteine 17 carries N-palmitoyl cysteine lipidation. Cysteine 17 carries S-diacylglycerol cysteine lipidation.

Belongs to the BMP lipoprotein family. As to quaternary structure, monomer.

It is found in the cell inner membrane. In terms of biological role, binds adenosine and inosine. May be part of an ABC-type nucleoside uptake system involved in the purine salvage pathway. The protein is Basic membrane protein D of Borreliella burgdorferi (strain JD1) (Borrelia burgdorferi).